Reading from the N-terminus, the 147-residue chain is D-aminoacyl-tRNA deacylase (147 aa).

The short motif at 136–137 (GP) is the Gly-cisPro motif, important for rejection of L-amino acids element.

The protein belongs to the DTD family. Homodimer.

The protein resides in the cytoplasm. It carries out the reaction glycyl-tRNA(Ala) + H2O = tRNA(Ala) + glycine + H(+). The catalysed reaction is a D-aminoacyl-tRNA + H2O = a tRNA + a D-alpha-amino acid + H(+). Functionally, an aminoacyl-tRNA editing enzyme that deacylates mischarged D-aminoacyl-tRNAs. Also deacylates mischarged glycyl-tRNA(Ala), protecting cells against glycine mischarging by AlaRS. Acts via tRNA-based rather than protein-based catalysis; rejects L-amino acids rather than detecting D-amino acids in the active site. By recycling D-aminoacyl-tRNA to D-amino acids and free tRNA molecules, this enzyme counteracts the toxicity associated with the formation of D-aminoacyl-tRNA entities in vivo and helps enforce protein L-homochirality. The chain is D-aminoacyl-tRNA deacylase from Streptococcus thermophilus (strain CNRZ 1066).